The sequence spans 237 residues: Phosphatidylserine decarboxylase proenzyme (237 aa).

The active-site Schiff-base intermediate with substrate; via pyruvic acid is Ser-206. The residue at position 206 (Ser-206) is a Pyruvic acid (Ser); by autocatalysis.

It belongs to the phosphatidylserine decarboxylase family. PSD-A subfamily. Heterodimer of a large membrane-associated beta subunit and a small pyruvoyl-containing alpha subunit. Pyruvate is required as a cofactor. Is synthesized initially as an inactive proenzyme. Formation of the active enzyme involves a self-maturation process in which the active site pyruvoyl group is generated from an internal serine residue via an autocatalytic post-translational modification. Two non-identical subunits are generated from the proenzyme in this reaction, and the pyruvate is formed at the N-terminus of the alpha chain, which is derived from the carboxyl end of the proenzyme. The post-translation cleavage follows an unusual pathway, termed non-hydrolytic serinolysis, in which the side chain hydroxyl group of the serine supplies its oxygen atom to form the C-terminus of the beta chain, while the remainder of the serine residue undergoes an oxidative deamination to produce ammonia and the pyruvoyl prosthetic group on the alpha chain.

The protein localises to the cell membrane. The catalysed reaction is a 1,2-diacyl-sn-glycero-3-phospho-L-serine + H(+) = a 1,2-diacyl-sn-glycero-3-phosphoethanolamine + CO2. Its pathway is phospholipid metabolism; phosphatidylethanolamine biosynthesis; phosphatidylethanolamine from CDP-diacylglycerol: step 2/2. Its function is as follows. Catalyzes the formation of phosphatidylethanolamine (PtdEtn) from phosphatidylserine (PtdSer). This is Phosphatidylserine decarboxylase proenzyme from Rhodococcus jostii (strain RHA1).